The following is a 173-amino-acid chain: Adenine phosphoribosyltransferase (173 aa).

The protein belongs to the purine/pyrimidine phosphoribosyltransferase family. In terms of assembly, homodimer.

The protein localises to the cytoplasm. The enzyme catalyses AMP + diphosphate = 5-phospho-alpha-D-ribose 1-diphosphate + adenine. The protein operates within purine metabolism; AMP biosynthesis via salvage pathway; AMP from adenine: step 1/1. Catalyzes a salvage reaction resulting in the formation of AMP, that is energically less costly than de novo synthesis. The protein is Adenine phosphoribosyltransferase of Desulfitobacterium hafniense (strain Y51).